We begin with the raw amino-acid sequence, 184 residues long: RNA 2',3'-cyclic phosphodiesterase (184 aa).

The Proton donor role is filled by His-42. Short sequence motifs (HXTX) lie at residues 42–45 (HFTL) and 127–130 (HLTV). The active-site Proton acceptor is His-127.

Belongs to the 2H phosphoesterase superfamily. ThpR family.

It carries out the reaction a 3'-end 2',3'-cyclophospho-ribonucleotide-RNA + H2O = a 3'-end 2'-phospho-ribonucleotide-RNA + H(+). Functionally, hydrolyzes RNA 2',3'-cyclic phosphodiester to an RNA 2'-phosphomonoester. This is RNA 2',3'-cyclic phosphodiesterase from Methanothermobacter thermautotrophicus (strain ATCC 29096 / DSM 1053 / JCM 10044 / NBRC 100330 / Delta H) (Methanobacterium thermoautotrophicum).